Reading from the N-terminus, the 318-residue chain is Methionyl-tRNA formyltransferase (318 aa).

(6S)-5,6,7,8-tetrahydrofolate is bound at residue 112–115 (SILP).

It belongs to the Fmt family.

The catalysed reaction is L-methionyl-tRNA(fMet) + (6R)-10-formyltetrahydrofolate = N-formyl-L-methionyl-tRNA(fMet) + (6S)-5,6,7,8-tetrahydrofolate + H(+). Attaches a formyl group to the free amino group of methionyl-tRNA(fMet). The formyl group appears to play a dual role in the initiator identity of N-formylmethionyl-tRNA by promoting its recognition by IF2 and preventing the misappropriation of this tRNA by the elongation apparatus. This is Methionyl-tRNA formyltransferase from Haemophilus influenzae (strain PittEE).